The sequence spans 314 residues: Ribosomal protein L11 methyltransferase (314 aa).

Residues Thr-161, Gly-182, Asp-204, and Asn-248 each contribute to the S-adenosyl-L-methionine site.

This sequence belongs to the methyltransferase superfamily. PrmA family.

The protein resides in the cytoplasm. It catalyses the reaction L-lysyl-[protein] + 3 S-adenosyl-L-methionine = N(6),N(6),N(6)-trimethyl-L-lysyl-[protein] + 3 S-adenosyl-L-homocysteine + 3 H(+). In terms of biological role, methylates ribosomal protein L11. The sequence is that of Ribosomal protein L11 methyltransferase from Listeria monocytogenes serotype 4a (strain HCC23).